The primary structure comprises 286 residues: Master replication protein (286 aa).

Residues 2 to 96 form the CRESS-DNA virus Rep endonuclease domain; that stretch reads ARQVICWCFT…LEGPWEYGEF (95 aa). The RCR-1 motif lies at 9 to 12; that stretch reads CFTL. The a divalent metal cation site is built by E33 and H41. Positions 41 to 43 match the RCR-2 motif; that stretch reads HFQ. The Nuclear localization signal signature appears at 50 to 70; it reads KRTSLAGMKKLIPGAHFEKRR. The For DNA cleavage activity role is filled by Y79. An RCR-3 motif is present at residues 79–82; it reads YSMK. D84 is an a divalent metal cation binding site. The Nuclear localization signal signature appears at 96–102; the sequence is FVPTIED. 186–188 contributes to the ATP binding site; the sequence is GKT.

Belongs to the nanoviridea/circoviridae replication-associated protein family. As to quaternary structure, homooligomer (Potential). Rep binds to repeated DNA motifs (iterons). The cofactor is Mg(2+). Mn(2+) is required as a cofactor.

The protein resides in the host nucleus. The catalysed reaction is ATP + H2O = ADP + phosphate + H(+). Its function is as follows. Essential for the replication of all genomic viral ssDNA (trans-replication). The closed circular ssDNA genome is first converted to a superhelical dsDNA. Rep binds a specific hairpin at the genome origin of replication. Introduces an endonucleolytic nick within the conserved sequence 5'-A[GT]TATTAC-3' in the intergenic region of the genome, thereby initiating the rolling circle replication (RCR). Following cleavage, binds covalently to the 5'-phosphate of DNA as a tyrosyl ester. The cleavage gives rise to a free 3'-OH that serves as a primer for the cellular DNA polymerase. The polymerase synthesizes the (+) strand DNA by rolling circle mechanism. After one round of replication, a Rep-catalyzed nucleotidyl transfer reaction releases a circular single-stranded virus genome, thereby terminating the replication. Displays origin-specific DNA cleavage, nucleotidyl transferase, ATPase and helicase activities. The polypeptide is Master replication protein (DNA-R) (Cicer arietinum (Chickpea)).